A 363-amino-acid chain; its full sequence is MIIYTTEVEDINSFYTLESLKEVYGIIWMLVPILTLVLGITIGVLVIVWLEREISAGIQQRIGPEYAGPLGILQALADGTKLLFKENILPSRGNTRLFSIGPAIAVISILLSFSVIPFSSRLILADLNIGIFLWIAISSIAPVGLLMSGYGSNNKYSFLGGLRAAAQSISYEIPLTLCVLSISLLSNSSSTVDIVEAQSKYGFWGWNLWRQPIGFIVFLISSLAECERLPFDLPEAEEELVAGYQTEYSGIKFGLFYVASYLNLLLSSLFVTVLYLGGWNISIPYVFAPELFEINKINGIIGTTIGIFITLAKTYLFLFISIATRWTLPRLRMDQLLNLGWKFLLPISLGNLLLTTSFQLLSL.

A run of 6 helical transmembrane segments spans residues 30 to 50 (LVPI…IVWL), 98 to 118 (FSIG…VIPF), 129 to 149 (IGIF…LMSG), 248 to 268 (YSGI…LLSS), 300 to 320 (IIGT…FLFI), and 343 to 363 (FLLP…LLSL).

The protein belongs to the complex I subunit 1 family. In terms of assembly, NDH is composed of at least 16 different subunits, 5 of which are encoded in the nucleus.

The protein localises to the plastid. It localises to the chloroplast thylakoid membrane. It carries out the reaction a plastoquinone + NADH + (n+1) H(+)(in) = a plastoquinol + NAD(+) + n H(+)(out). The catalysed reaction is a plastoquinone + NADPH + (n+1) H(+)(in) = a plastoquinol + NADP(+) + n H(+)(out). NDH shuttles electrons from NAD(P)H:plastoquinone, via FMN and iron-sulfur (Fe-S) centers, to quinones in the photosynthetic chain and possibly in a chloroplast respiratory chain. The immediate electron acceptor for the enzyme in this species is believed to be plastoquinone. Couples the redox reaction to proton translocation, and thus conserves the redox energy in a proton gradient. The chain is NAD(P)H-quinone oxidoreductase subunit 1, chloroplastic from Gossypium hirsutum (Upland cotton).